Reading from the N-terminus, the 251-residue chain is Triosephosphate isomerase (251 aa).

Residue 9-11 (NWK) participates in substrate binding. His94 functions as the Electrophile in the catalytic mechanism. The Proton acceptor role is filled by Glu167. Substrate is bound by residues Gly173, Ser213, and 234 to 235 (GG).

It belongs to the triosephosphate isomerase family. In terms of assembly, homodimer.

It is found in the cytoplasm. The catalysed reaction is D-glyceraldehyde 3-phosphate = dihydroxyacetone phosphate. It participates in carbohydrate biosynthesis; gluconeogenesis. Its pathway is carbohydrate degradation; glycolysis; D-glyceraldehyde 3-phosphate from glycerone phosphate: step 1/1. In terms of biological role, involved in the gluconeogenesis. Catalyzes stereospecifically the conversion of dihydroxyacetone phosphate (DHAP) to D-glyceraldehyde-3-phosphate (G3P). In Finegoldia magna (strain ATCC 29328 / DSM 20472 / WAL 2508) (Peptostreptococcus magnus), this protein is Triosephosphate isomerase.